Reading from the N-terminus, the 52-residue chain is Insulin (52 aa).

3 disulfide bridges follow: C7–C38, C19–C51, and C37–C42.

The protein belongs to the insulin family. As to quaternary structure, heterodimer of a B chain and an A chain linked by two disulfide bonds.

It localises to the secreted. Functionally, insulin decreases blood glucose concentration. It increases cell permeability to monosaccharides, amino acids and fatty acids. It accelerates glycolysis, the pentose phosphate cycle, and glycogen synthesis in liver. In Polypterus senegalus (Senegal bichir), this protein is Insulin (ins).